The primary structure comprises 937 residues: AP-2 complex subunit beta (937 aa).

Residue Thr-2 is modified to N-acetylthreonine. Ser-4 carries the post-translational modification Phosphoserine. Lys-265 carries the post-translational modification N6-acetyllysine. The segment at 593–617 is disordered; sequence LPIHHGSTDAGDSPVGTTTTTNLEQ. Positions 607–617 are enriched in polar residues; the sequence is VGTTTTTNLEQ. Phosphotyrosine is present on residues Tyr-737 and Tyr-928.

This sequence belongs to the adaptor complexes large subunit family. As to quaternary structure, adaptor protein complex 2 (AP-2) is a heterotetramer composed of two large adaptins (alpha-type subunit AP2A1 or AP2A2 and beta-type subunit AP2B1), a medium adaptin (mu-type subunit AP2M1) and a small adaptin (sigma-type subunit AP2S1). Interacts with EPN1. Interacts with EPS15; clathrin competes with EPS15. Interacts with SNAP91; clathrin competes with SNAP91. Interacts with CLTC; clathrin competes with EPS15, SNAP91 and PIP5K1C. Interacts with LDLRAP1. Interacts with AMPH and BIN1. Interacts with ARF6 (GDP-bound). Interacts (dephosphorylated at Tyr-737) with ARRB1; phosphorylation of AP2B1 at Tyr-737 disrupts the interaction. Interacts with SLC2A8. Interacts with SCYL1 and SCYL2. Interacts with TGFBR1 and TGFBR2. Interacts with PIP5K1C; clathrin competes with PIP5K1C. Interacts with DENND1B. Interacts with FCHO1. Interacts with RFTN1. Interacts with KIAA1107. Together with AP2A1 or AP2A2 and AP2M1, it interacts with ADAM10; this interaction facilitates ADAM10 endocytosis from the plasma membrane during long-term potentiation in hippocampal neurons. Expressed in the brain (at protein level).

The protein localises to the cell membrane. The protein resides in the membrane. It localises to the coated pit. Its function is as follows. Component of the adaptor protein complex 2 (AP-2). Adaptor protein complexes function in protein transport via transport vesicles in different membrane traffic pathways. Adaptor protein complexes are vesicle coat components and appear to be involved in cargo selection and vesicle formation. AP-2 is involved in clathrin-dependent endocytosis in which cargo proteins are incorporated into vesicles surrounded by clathrin (clathrin-coated vesicles, CCVs) which are destined for fusion with the early endosome. The clathrin lattice serves as a mechanical scaffold but is itself unable to bind directly to membrane components. Clathrin-associated adaptor protein (AP) complexes which can bind directly to both the clathrin lattice and to the lipid and protein components of membranes are considered to be the major clathrin adaptors contributing the CCV formation. AP-2 also serves as a cargo receptor to selectively sort the membrane proteins involved in receptor-mediated endocytosis. AP-2 seems to play a role in the recycling of synaptic vesicle membranes from the presynaptic surface. AP-2 recognizes Y-X-X-[FILMV] (Y-X-X-Phi) and [ED]-X-X-X-L-[LI] endocytosis signal motifs within the cytosolic tails of transmembrane cargo molecules. AP-2 may also play a role in maintaining normal post-endocytic trafficking through the ARF6-regulated, non-clathrin pathway. During long-term potentiation in hippocampal neurons, AP-2 is responsible for the endocytosis of ADAM10. The AP-2 beta subunit acts via its C-terminal appendage domain as a scaffolding platform for endocytic accessory proteins; at least some clathrin-associated sorting proteins (CLASPs) are recognized by their [DE]-X(1,2)-F-X-X-[FL]-X-X-X-R motif. The AP-2 beta subunit binds to clathrin heavy chain, promoting clathrin lattice assembly; clathrin displaces at least some CLASPs from AP2B1 which probably then can be positioned for further coat assembly. The sequence is that of AP-2 complex subunit beta (Ap2b1) from Mus musculus (Mouse).